The following is a 274-amino-acid chain: MPELPEVETTKQGIKPHLEGRIITTAQVRNRKLRLPVPLNLNELCEGKHITAITRRGKYILLHMDKGYILIHLGMSGHLRIVSQTANPQKHDHVDLHINNGLALRFCDPRRFGLFIYIDENPYQHPLLAHLGPEPLSDDFNSEYLLRKAANKSQSIKSFIMDSQIVVGIGNIYAAESLFLAKIHPNTSAKKITTEEFNSLTGHIKKILESAIEAGGTTLRDFYSSDGKPGYFRFALKVYGRKNLPCLVCENKIETVVIAGRHSAFCPHCQPIIT.

Pro-2 functions as the Schiff-base intermediate with DNA in the catalytic mechanism. Glu-3 (proton donor) is an active-site residue. Lys-58 serves as the catalytic Proton donor; for beta-elimination activity. 3 residues coordinate DNA: His-91, Arg-110, and Lys-152. An FPG-type zinc finger spans residues 237–271; sequence KVYGRKNLPCLVCENKIETVVIAGRHSAFCPHCQP. The Proton donor; for delta-elimination activity role is filled by Arg-261.

This sequence belongs to the FPG family. As to quaternary structure, monomer. Zn(2+) serves as cofactor.

It catalyses the reaction Hydrolysis of DNA containing ring-opened 7-methylguanine residues, releasing 2,6-diamino-4-hydroxy-5-(N-methyl)formamidopyrimidine.. It carries out the reaction 2'-deoxyribonucleotide-(2'-deoxyribose 5'-phosphate)-2'-deoxyribonucleotide-DNA = a 3'-end 2'-deoxyribonucleotide-(2,3-dehydro-2,3-deoxyribose 5'-phosphate)-DNA + a 5'-end 5'-phospho-2'-deoxyribonucleoside-DNA + H(+). In terms of biological role, involved in base excision repair of DNA damaged by oxidation or by mutagenic agents. Acts as a DNA glycosylase that recognizes and removes damaged bases. Has a preference for oxidized purines, such as 7,8-dihydro-8-oxoguanine (8-oxoG). Has AP (apurinic/apyrimidinic) lyase activity and introduces nicks in the DNA strand. Cleaves the DNA backbone by beta-delta elimination to generate a single-strand break at the site of the removed base with both 3'- and 5'-phosphates. This is Formamidopyrimidine-DNA glycosylase from Legionella pneumophila (strain Paris).